Here is a 601-residue protein sequence, read N- to C-terminus: Probable Xaa-Pro aminopeptidase P (601 aa).

The Mn(2+) site is built by Asp-398, Asp-409, Glu-507, and Glu-521.

This sequence belongs to the peptidase M24B family. Mn(2+) serves as cofactor.

It carries out the reaction Release of any N-terminal amino acid, including proline, that is linked to proline, even from a dipeptide or tripeptide.. In terms of biological role, catalyzes the removal of a penultimate prolyl residue from the N-termini of peptides. This is Probable Xaa-Pro aminopeptidase P (ampp) from Sclerotinia sclerotiorum (strain ATCC 18683 / 1980 / Ss-1) (White mold).